A 216-amino-acid polypeptide reads, in one-letter code: MDEQEIREEVALAERRATLYWWFASMLCRELDSDQLNTLCSESGRVLLDALAEEPSLAPGCQKLRRALAGVQVLATPQLELAADYATAFLGDHLGSAPPYASVYVEPGGMMFQHPHQQMVQWLQQWQLAVSFDGNEPADHFAIMLDLMGNLVLKGVDSPEAQSAQSALLAEMLPPMRRWVTQCQRQPGFYAALAELLLAFVSLDQTLIEGEFSLAQ.

It belongs to the TorD/DmsD family. TorD subfamily.

It localises to the cytoplasm. Its function is as follows. Involved in the biogenesis of TorA. Acts on TorA before the insertion of the molybdenum cofactor and, as a result, probably favors a conformation of the apoenzyme that is competent for acquiring the cofactor. This is Chaperone protein TorD from Ferrimonas balearica (strain DSM 9799 / CCM 4581 / KCTC 23876 / PAT).